Reading from the N-terminus, the 183-residue chain is Ribosome maturation factor RimM (183 aa).

The PRC barrel domain occupies 104 to 183 (EGDYYWKDLM…TIEVDWDPGF (80 aa)).

This sequence belongs to the RimM family. As to quaternary structure, binds ribosomal protein uS19.

The protein localises to the cytoplasm. In terms of biological role, an accessory protein needed during the final step in the assembly of 30S ribosomal subunit, possibly for assembly of the head region. Essential for efficient processing of 16S rRNA. May be needed both before and after RbfA during the maturation of 16S rRNA. It has affinity for free ribosomal 30S subunits but not for 70S ribosomes. The sequence is that of Ribosome maturation factor RimM from Salmonella choleraesuis (strain SC-B67).